We begin with the raw amino-acid sequence, 577 residues long: Outer spore wall assembly protein SHE10 (577 aa).

A signal peptide spans 1–23; the sequence is MGKLIKLITTLTVLVSLLQYCCE. 2 coiled-coil regions span residues 379 to 416 and 513 to 561; these read NETR…ENVE and ILRS…EEDV. Residues 525 to 545 are compositionally biased toward basic and acidic residues; it reads RERKERERKEREKAAAEEFQR. The interval 525-577 is disordered; sequence RERKERERKEREKAAAEEFQRQQELLLQQEEEDEEDVSYTSTSTITTTTTMTL. Residues 562-577 show a composition bias toward low complexity; sequence SYTSTSTITTTTTMTL.

Belongs to the SHE10 family. As to quaternary structure, component of the mitochondria-localized RNase mitochondrial RNA-processing (RNase MRP) composed of one single RNA encoded by the NME1 gene and at least 31 proteins. Absent in the nucleus-localized RNase MRP (NuMRP).

Its subcellular location is the mitochondrion. Involved in spore wall assembly. May be a component of the mitochondrial RNase MRP (MtMRP), a ribonucleoprotein endoribonuclease involved in the cleaving RNA transcripts to generate primers for DNA replication in mitochondria. This chain is Outer spore wall assembly protein SHE10, found in Saccharomyces cerevisiae (strain JAY291) (Baker's yeast).